A 629-amino-acid chain; its full sequence is Citrate (Re)-synthase (629 aa).

The 271-residue stretch at 59–329 (IFITDTTFRD…TNGIDTTVIT (271 aa)) folds into the Pyruvate carboxyltransferase domain. The Cache domain maps to 497 to 601 (VMQRFIEEYP…GVDIRVEDLV (105 aa)).

This sequence belongs to the alpha-IPM synthase/homocitrate synthase family. In terms of assembly, homotetramer. The cofactor is Co(2+). Requires Mn(2+) as cofactor.

It carries out the reaction oxaloacetate + acetyl-CoA + H2O = citrate + CoA + H(+). With respect to regulation, inhibited by p-hydroxymercuribenzoate and EDTA. Functionally, catalyzes the condensation of the acetyl group of acetyl-CoA with oxaloacetate to form citrate. The sequence is that of Citrate (Re)-synthase from Syntrophus aciditrophicus (strain SB).